The following is a 473-amino-acid chain: UDP-glycosyltransferase 71B1 (473 aa).

Histidine 15 functions as the Proton acceptor in the catalytic mechanism. An an anthocyanidin-binding site is contributed by histidine 15. Catalysis depends on aspartate 110, which acts as the Charge relay. Residues threonine 132, alanine 342, glutamine 344, histidine 359, tryptophan 362, asparagine 363, serine 364, and glutamate 367 each contribute to the UDP-alpha-D-glucose site. An an anthocyanidin-binding site is contributed by alanine 382. UDP-alpha-D-glucose is bound by residues glutamate 383 and glutamine 384.

The protein belongs to the UDP-glycosyltransferase family.

The enzyme catalyses a flavonol + UDP-alpha-D-glucose = a flavonol 3-O-beta-D-glucoside + UDP + H(+). Possesses quercetin 3-O-glucosyltransferase activity in vitro. Also active in vitro on benzoates and benzoate derivatives. The sequence is that of UDP-glycosyltransferase 71B1 (UGT71B1) from Arabidopsis thaliana (Mouse-ear cress).